The sequence spans 266 residues: Thiazole synthase (266 aa).

Residue K110 is the Schiff-base intermediate with DXP of the active site. Residues G171, 197–198, and 219–220 contribute to the 1-deoxy-D-xylulose 5-phosphate site; these read AG and AT.

It belongs to the ThiG family. Homotetramer. Forms heterodimers with either ThiH or ThiS.

It localises to the cytoplasm. It carries out the reaction [ThiS sulfur-carrier protein]-C-terminal-Gly-aminoethanethioate + 2-iminoacetate + 1-deoxy-D-xylulose 5-phosphate = [ThiS sulfur-carrier protein]-C-terminal Gly-Gly + 2-[(2R,5Z)-2-carboxy-4-methylthiazol-5(2H)-ylidene]ethyl phosphate + 2 H2O + H(+). The protein operates within cofactor biosynthesis; thiamine diphosphate biosynthesis. Functionally, catalyzes the rearrangement of 1-deoxy-D-xylulose 5-phosphate (DXP) to produce the thiazole phosphate moiety of thiamine. Sulfur is provided by the thiocarboxylate moiety of the carrier protein ThiS. In vitro, sulfur can be provided by H(2)S. The protein is Thiazole synthase of Thermobifida fusca (strain YX).